A 353-amino-acid chain; its full sequence is F-box protein At2g14290 (353 aa).

The 53-residue stretch at 6–58 (PRTWSELPPDLLGSIFHRLSFTDFHRAKIVCWNWNLSSKLTVPKKIRSPWLML) folds into the F-box domain.

This Arabidopsis thaliana (Mouse-ear cress) protein is F-box protein At2g14290.